The sequence spans 295 residues: uncharacterized protein (295 aa).

Positions Met1 to Ala19 are cleaved as a signal peptide.

This is an uncharacterized protein from Rickettsia typhi (strain ATCC VR-144 / Wilmington).